The chain runs to 400 residues: Enoyl-[acyl-carrier-protein] reductase [NADH] (400 aa).

NAD(+) contacts are provided by residues 48–53, 74–75, 111–112, and 139–140; these read GSSSGY, FE, DA, and LA. Position 225 (tyrosine 225) interacts with substrate. Catalysis depends on tyrosine 235, which acts as the Proton donor. Residues lysine 244 and 273–275 contribute to the NAD(+) site; that span reads VVT.

It belongs to the TER reductase family. As to quaternary structure, monomer.

The enzyme catalyses a 2,3-saturated acyl-[ACP] + NAD(+) = a (2E)-enoyl-[ACP] + NADH + H(+). It participates in lipid metabolism; fatty acid biosynthesis. Its function is as follows. Involved in the final reduction of the elongation cycle of fatty acid synthesis (FAS II). Catalyzes the reduction of a carbon-carbon double bond in an enoyl moiety that is covalently linked to an acyl carrier protein (ACP). The sequence is that of Enoyl-[acyl-carrier-protein] reductase [NADH] from Shewanella baltica (strain OS223).